Consider the following 126-residue polypeptide: Ribosome-binding factor A (126 aa).

It belongs to the RbfA family. As to quaternary structure, monomer. Binds 30S ribosomal subunits, but not 50S ribosomal subunits or 70S ribosomes.

The protein localises to the cytoplasm. Functionally, one of several proteins that assist in the late maturation steps of the functional core of the 30S ribosomal subunit. Associates with free 30S ribosomal subunits (but not with 30S subunits that are part of 70S ribosomes or polysomes). Required for efficient processing of 16S rRNA. May interact with the 5'-terminal helix region of 16S rRNA. This Thermosynechococcus vestitus (strain NIES-2133 / IAM M-273 / BP-1) protein is Ribosome-binding factor A.